We begin with the raw amino-acid sequence, 93 residues long: Co-chaperonin GroES (93 aa).

Belongs to the GroES chaperonin family. Heptamer of 7 subunits arranged in a ring. Interacts with the chaperonin GroEL.

It is found in the cytoplasm. Functionally, together with the chaperonin GroEL, plays an essential role in assisting protein folding. The GroEL-GroES system forms a nano-cage that allows encapsulation of the non-native substrate proteins and provides a physical environment optimized to promote and accelerate protein folding. GroES binds to the apical surface of the GroEL ring, thereby capping the opening of the GroEL channel. The sequence is that of Co-chaperonin GroES from Streptococcus constellatus.